The following is a 304-amino-acid chain: ATP synthase gamma chain (304 aa).

Belongs to the ATPase gamma chain family. As to quaternary structure, F-type ATPases have 2 components, CF(1) - the catalytic core - and CF(0) - the membrane proton channel. CF(1) has five subunits: alpha(3), beta(3), gamma(1), delta(1), epsilon(1). CF(0) has three main subunits: a, b and c.

The protein localises to the cell membrane. In terms of biological role, produces ATP from ADP in the presence of a proton gradient across the membrane. The gamma chain is believed to be important in regulating ATPase activity and the flow of protons through the CF(0) complex. This is ATP synthase gamma chain from Mycobacterium ulcerans (strain Agy99).